Consider the following 150-residue polypeptide: Endoribonuclease YbeY (150 aa).

Zn(2+) is bound by residues His-113, His-117, and His-123.

Belongs to the endoribonuclease YbeY family. Zn(2+) serves as cofactor.

The protein localises to the cytoplasm. Single strand-specific metallo-endoribonuclease involved in late-stage 70S ribosome quality control and in maturation of the 3' terminus of the 16S rRNA. This Malacoplasma penetrans (strain HF-2) (Mycoplasma penetrans) protein is Endoribonuclease YbeY.